The sequence spans 343 residues: Sulfate/thiosulfate import ATP-binding protein CysA (343 aa).

The ABC transporter domain maps to 3 to 233 (ILIENISKTF…PATPFVMGFM (231 aa)). 35 to 42 (GPSGSGKS) is a binding site for ATP.

Belongs to the ABC transporter superfamily. Sulfate/tungstate importer (TC 3.A.1.6) family.

Its subcellular location is the plastid. It localises to the chloroplast. The enzyme catalyses sulfate(out) + ATP + H2O = sulfate(in) + ADP + phosphate + H(+). It carries out the reaction thiosulfate(out) + ATP + H2O = thiosulfate(in) + ADP + phosphate + H(+). Functionally, part of the ABC transporter complex involved in sulfate/thiosulfate import. Responsible for energy coupling to the transport system. This chain is Sulfate/thiosulfate import ATP-binding protein CysA, found in Nephroselmis olivacea (Green alga).